The sequence spans 329 residues: Helicase VP6-A (329 aa).

Disordered stretches follow at residues 28-130 and 189-232; these read NLVD…TNGG and DLRR…SEEP. Basic and acidic residues-rich tracts occupy residues 36 to 58, 65 to 83, and 96 to 109; these read EGGK…KDGE, GQKE…DRRI, and SGER…RGDG. Lys-110 contributes to the ATP binding site. The segment covering 110–129 has biased composition (gly residues); it reads KVGGGGGDADAGVGATGTNG. 2 stretches are compositionally biased toward basic and acidic residues: residues 189 to 207 and 215 to 232; these read DLRR…ERGG and HGDA…SEEP.

The protein belongs to the reoviruses VP6 family. Homohexamer.

Its subcellular location is the virion. It carries out the reaction ATP + H2O = ADP + phosphate + H(+). In terms of biological role, ATP dependent RNA helicase essential for RNA packaging and viral transcription. Possesses ss- and dsRNA-binding capacity. This Bluetongue virus 10 (isolate USA) (BTV 10) protein is Helicase VP6-A (Segment-9).